Reading from the N-terminus, the 214-residue chain is uncharacterized protein (214 aa).

The Response regulatory domain maps to 2–118; the sequence is KIVIADDHHV…ELVKTRQVHG (117 aa). Asp-53 carries the 4-aspartylphosphate modification. In terms of domain architecture, HTH luxR-type spans 142 to 207; the sequence is EKEKYYQLTR…QAALFAVKYN (66 aa). The H-T-H motif DNA-binding region spans 166 to 185; that stretch reads NKEIAAALFISEKTVKTHVS.

In terms of processing, phosphorylated by YhcY.

The protein resides in the cytoplasm. Its function is as follows. Member of the two-component regulatory system YhcY/YhcZ. This is an uncharacterized protein from Bacillus subtilis (strain 168).